The following is a 351-amino-acid chain: MYEPIAPISWRDGQVEMIDQTLLPGELVIIRPRTVEEMWDAIKKLKVRGAPAIGIAAALGLYLAVKDSGARDKAGFEAELQKAAAYLASSRPTAVNLFWALKRVQQAVAAAATDDVAALKELVLKEALAIRDEDEAMCRAIGEHGASLLADAEAVLTHCNAGTLATARYGTALAPIYTLAARGKVLKVFADETRPLLQGARLTTWELHQAGIPVTLITDNMAATVMARGWVQAVIVGADRITANGDVANKIGTYGVAILAREHGIPFYVAAPASTFDLSLSGGEQIPIEERDPAEVSHFGLRPTAPEGIGIFNPAFDVTPYRYVTAIITEKGVIRPPYKQNIAKVLAGESR.

Substrate is bound by residues 48-50, arginine 91, and glutamine 198; that span reads RGA. Aspartate 239 serves as the catalytic Proton donor. Residue 249–250 coordinates substrate; the sequence is NK.

The protein belongs to the EIF-2B alpha/beta/delta subunits family. DrdI subfamily.

It carries out the reaction 5-deoxy-alpha-D-ribose 1-phosphate = 5-deoxy-D-ribulose 1-phosphate. It functions in the pathway carbohydrate degradation. Its function is as follows. Catalyzes the isomerization of 5-deoxy-alpha-D-ribose 1-phosphate to 5-deoxy-D-ribulose 1-phosphate, as part of a 5-deoxyribose salvage pathway that recycles this toxic radical SAM enzyme by-product to mainstream metabolites. In Moorella thermoacetica (strain ATCC 39073 / JCM 9320), this protein is 5-deoxyribose 1-phosphate isomerase.